Here is a 558-residue protein sequence, read N- to C-terminus: Ubiquitin carboxyl-terminal hydrolase 30 homolog (558 aa).

Residues 6–26 (ILMAAGVTVAAVVGAFVFWGP) traverse the membrane as a helical segment. A USP domain is found at 39–550 (AGLHNFGLTC…PAYLLFYDRG (512 aa)). C48 functions as the Nucleophile in the catalytic mechanism. The tract at residues 267 to 300 (LATPMLGGERSSRPRLPQSQQQQDEGLNRRVSSS) is disordered. Over residues 280 to 289 (PRLPQSQQQQ) the composition is skewed to low complexity. The active-site Proton acceptor is the H506.

Belongs to the peptidase C19 family.

It is found in the mitochondrion outer membrane. It catalyses the reaction Thiol-dependent hydrolysis of ester, thioester, amide, peptide and isopeptide bonds formed by the C-terminal Gly of ubiquitin (a 76-residue protein attached to proteins as an intracellular targeting signal).. Its function is as follows. Deubiquitinating enzyme that acts as a key inhibitor of mitophagy by counteracting the action of parkin (park). This Drosophila melanogaster (Fruit fly) protein is Ubiquitin carboxyl-terminal hydrolase 30 homolog.